The chain runs to 847 residues: MEKVTNSAAAKPQGNNKKQESAYNGTAKDKKKPNLDIETTDSDLLSDIHLDGTKEQKVQTLFSKVFEDTGPSTAKTADRKRRLQAEADANNNDTEKASKLAKTSVATTDMDLRVTRKQHTFYMKVQALLAEHAEKESTKKASKMAKISEADLILFMTQKEIEYYMKVKALIAKCAEEGSKLLDNWTSSKDIAKTADHERRLQAEADAKNNDTKKAGQSAKESVATTDMQLNVIKEQMEHCKKVQALLANESKGAEKESKVLDYSTGPSTSSKEAAAAKTADHERRLLAEADVNNNDTEKAGQSAMESVATQGASATERKQSFSLGLEHTSPIQVNGAALACPLVRKSLPPGEANSCPPPPKRDPAAVKSSVKIIKVKAPEEGNNNNDEKEMSTETSETHKTDSVEEGRRVVKWIIFPIKPNFFFKYFWEQTACLVQRTNPKYFQSLISFKMLDEILIRHHLDFTVNLDVTTYKNGKRETLNPEGRALPPAVWGFYSEGCSIRLLNPSAYLTRLREVCTVLQEFFHCKVEANMYLTPPNSQGFAPHYDDIEAFVIQVEGRKRWLLYEPPKEADHLARISSGNYDQEQLGKPIIDEVLSAGDVLYFPRGTVHQAITEEQQHSLHITLSVYQQQAYANLLETLMPMVLKKAVDRSVALRRGLPLHTFQVLGNAYKANDCGSRQLLVENVQKLVTKYLIPSEDDIDEAVDQMAKKFQHEALPPIVLPSEEVRTVHGARSGADEQGNCVCDYKFNEKTSVRLLRANILRLVTEPDGSVRIYHHADNGLDYCKYEPYFMEILPEEAKAVELLISAYPYYLTIDQLPLKSSARKVEVATALWEHGLLMTEKPFK.

A compositionally biased stretch (polar residues) spans 1–24 (MEKVTNSAAAKPQGNNKKQESAYN). 3 disordered regions span residues 1 to 45 (MEKV…SDLL), 203 to 223 (AEADAKNNDTKKAGQSAKESV), and 254 to 320 (AEKE…ERKQ). The span at 203-214 (AEADAKNNDTKK) shows a compositional bias: basic and acidic residues. The segment covering 268-278 (STSSKEAAAAK) has biased composition (low complexity). The span at 279–288 (TADHERRLLA) shows a compositional bias: basic and acidic residues. Over residues 304-314 (AMESVATQGAS) the composition is skewed to polar residues. Ser323 is modified (phosphoserine). At Thr329 the chain carries Phosphothreonine. A Phosphoserine modification is found at Ser330. Residues 377-401 (KAPEEGNNNNDEKEMSTETSETHKT) form a disordered region. The segment covering 386-401 (NDEKEMSTETSETHKT) has biased composition (basic and acidic residues). A JmjC domain is found at 499 to 644 (CSIRLLNPSA…NLLETLMPMV (146 aa)). Fe cation contacts are provided by His545, Asp547, and His610.

Belongs to the ROX family. NO66 subfamily. It depends on Fe(2+) as a cofactor.

The protein localises to the nucleus. The catalysed reaction is N(6),N(6)-dimethyl-L-lysyl(36)-[histone H3] + 2 2-oxoglutarate + 2 O2 = L-lysyl(36)-[histone H3] + 2 formaldehyde + 2 succinate + 2 CO2. Oxygenase that can act as both a histone lysine demethylase and a ribosomal histidine hydroxylase. Specifically demethylates 'Lys-4' (H3K4me) and 'Lys-36' (H3K36me) of histone H3, thereby playing a central role in histone code. The polypeptide is Bifunctional lysine-specific demethylase and histidyl-hydroxylase NO66 (Drosophila simulans (Fruit fly)).